The chain runs to 747 residues: Ion-translocating oxidoreductase complex subunit C (747 aa).

4Fe-4S ferredoxin-type domains are found at residues 368-397 (MEPV…QQLY) and 407-436 (KARN…VQYY). [4Fe-4S] cluster is bound by residues cysteine 377, cysteine 380, cysteine 383, cysteine 387, cysteine 416, cysteine 419, cysteine 422, and cysteine 426. The interval 538–564 (VREERARENQTQQETPTVDVPSTELDD) is disordered.

The protein belongs to the 4Fe4S bacterial-type ferredoxin family. RnfC subfamily. The complex is composed of six subunits: RnfA, RnfB, RnfC, RnfD, RnfE and RnfG. [4Fe-4S] cluster is required as a cofactor.

Its subcellular location is the cell inner membrane. Functionally, part of a membrane-bound complex that couples electron transfer with translocation of ions across the membrane. In Pectobacterium carotovorum subsp. carotovorum (strain PC1), this protein is Ion-translocating oxidoreductase complex subunit C.